Here is a 283-residue protein sequence, read N- to C-terminus: Energy-coupling factor transporter ATP-binding protein EcfA1 (283 aa).

The ABC transporter domain maps to 7–244 (VEFRHVSFTY…PELLQEIGLD (238 aa)). An ATP-binding site is contributed by 41–48 (GHNGSGKS).

Belongs to the ABC transporter superfamily. Energy-coupling factor EcfA family. Forms a stable energy-coupling factor (ECF) transporter complex composed of 2 membrane-embedded substrate-binding proteins (S component), 2 ATP-binding proteins (A component) and 2 transmembrane proteins (T component).

The protein resides in the cell membrane. In terms of biological role, ATP-binding (A) component of a common energy-coupling factor (ECF) ABC-transporter complex. Unlike classic ABC transporters this ECF transporter provides the energy necessary to transport a number of different substrates. In Lactobacillus acidophilus (strain ATCC 700396 / NCK56 / N2 / NCFM), this protein is Energy-coupling factor transporter ATP-binding protein EcfA1.